Consider the following 161-residue polypeptide: Endoribonuclease YbeY (161 aa).

Zn(2+) is bound by residues histidine 120, histidine 124, and aspartate 130.

The protein belongs to the endoribonuclease YbeY family. Zn(2+) serves as cofactor.

It localises to the cytoplasm. Its function is as follows. Single strand-specific metallo-endoribonuclease involved in late-stage 70S ribosome quality control and in maturation of the 3' terminus of the 16S rRNA. The sequence is that of Endoribonuclease YbeY from Chlamydia trachomatis serovar A (strain ATCC VR-571B / DSM 19440 / HAR-13).